The following is a 198-amino-acid chain: Superoxide dismutase [Fe] (198 aa).

Positions 27, 74, 158, and 162 each coordinate Fe cation.

The protein belongs to the iron/manganese superoxide dismutase family. In terms of assembly, homodimer. It depends on Fe cation as a cofactor.

The protein localises to the cytoplasm. It carries out the reaction 2 superoxide + 2 H(+) = H2O2 + O2. Its function is as follows. Destroys superoxide anion radicals which are normally produced within the cells and which are toxic to biological systems. The polypeptide is Superoxide dismutase [Fe] (SODB) (Plasmodium falciparum (isolate HB3)).